A 357-amino-acid chain; its full sequence is Peptide chain release factor 1 (357 aa).

The residue at position 235 (Gln235) is an N5-methylglutamine. The segment covering 282-294 has biased composition (basic and acidic residues); it reads RQKADTERSESRR. The segment at 282–308 is disordered; that stretch reads RQKADTERSESRRSQVGSGDRSERIRT.

Belongs to the prokaryotic/mitochondrial release factor family. In terms of processing, methylated by PrmC. Methylation increases the termination efficiency of RF1.

It is found in the cytoplasm. In terms of biological role, peptide chain release factor 1 directs the termination of translation in response to the peptide chain termination codons UAG and UAA. The sequence is that of Peptide chain release factor 1 from Brucella anthropi (strain ATCC 49188 / DSM 6882 / CCUG 24695 / JCM 21032 / LMG 3331 / NBRC 15819 / NCTC 12168 / Alc 37) (Ochrobactrum anthropi).